The primary structure comprises 103 residues: Urease subunit beta (103 aa).

The protein belongs to the urease beta subunit family. In terms of assembly, heterotrimer of UreA (gamma), UreB (beta) and UreC (alpha) subunits. Three heterotrimers associate to form the active enzyme.

The protein resides in the cytoplasm. It catalyses the reaction urea + 2 H2O + H(+) = hydrogencarbonate + 2 NH4(+). It functions in the pathway nitrogen metabolism; urea degradation; CO(2) and NH(3) from urea (urease route): step 1/1. The chain is Urease subunit beta from Streptomyces avermitilis (strain ATCC 31267 / DSM 46492 / JCM 5070 / NBRC 14893 / NCIMB 12804 / NRRL 8165 / MA-4680).